A 472-amino-acid chain; its full sequence is Kynureninase 1 (472 aa).

Pyridoxal 5'-phosphate contacts are provided by residues Leu146, Thr147, 174–177 (FPSD), Ser231, Asp260, His263, and Tyr285. Lys286 is modified (N6-(pyridoxal phosphate)lysine). 2 residues coordinate pyridoxal 5'-phosphate: Trp326 and Asn354.

It belongs to the kynureninase family. Homodimer. Pyridoxal 5'-phosphate is required as a cofactor.

It localises to the cytoplasm. The enzyme catalyses L-kynurenine + H2O = anthranilate + L-alanine + H(+). It carries out the reaction 3-hydroxy-L-kynurenine + H2O = 3-hydroxyanthranilate + L-alanine + H(+). It functions in the pathway amino-acid degradation; L-kynurenine degradation; L-alanine and anthranilate from L-kynurenine: step 1/1. The protein operates within cofactor biosynthesis; NAD(+) biosynthesis; quinolinate from L-kynurenine: step 2/3. Catalyzes the cleavage of L-kynurenine (L-Kyn) and L-3-hydroxykynurenine (L-3OHKyn) into anthranilic acid (AA) and 3-hydroxyanthranilic acid (3-OHAA), respectively. This chain is Kynureninase 1 (bna5-1), found in Aspergillus niger (strain ATCC MYA-4892 / CBS 513.88 / FGSC A1513).